A 72-amino-acid chain; its full sequence is Conotoxin VnMKLT2-021 (72 aa).

Positions 1 to 22 (MKLTCVLIVAVLFLTACQLTTA) are cleaved as a signal peptide. The propeptide occupies 23 to 45 (ASYARSEREHPDLGSSDQNSKLT). The tract at residues 25–44 (YARSEREHPDLGSSDQNSKL) is disordered. Intrachain disulfides connect Cys-48–Cys-62, Cys-55–Cys-66, and Cys-61–Cys-71.

This sequence belongs to the conotoxin O1 superfamily. In terms of tissue distribution, expressed by the venom duct.

Its subcellular location is the secreted. The sequence is that of Conotoxin VnMKLT2-021 from Conus ventricosus (Mediterranean cone).